Here is a 190-residue protein sequence, read N- to C-terminus: DNA dC-&gt;dU-editing enzyme APOBEC-3C (190 aa).

One can recognise a CMP/dCMP-type deaminase domain in the interval 29–138 (DRNETWLCFT…PCYQEGLRSL (110 aa)). The tract at residues 40–86 (EGIKRRSVVSWKTGVFRNQVDSETHCHAERCFLSWFCDDILSPNTKY) is (Microbial infection) Required for interaction with human foamy virus protein Bet. Histidine 66 serves as a coordination point for Zn(2+). Residue glutamate 68 is the Proton donor of the active site. The Zn(2+) site is built by cysteine 97 and cysteine 100.

It belongs to the cytidine and deoxycytidylate deaminase family. In terms of assembly, homodimer. Interacts with TRIB3. Interacts with AGO2. (Microbial infection) Interacts with human foamy virus protein Bet; this interaction does not induce APOBEC3C degradation but prevents its dimerization and incorporation into the virion by binding of Bet close to or within the APOBEC3C dimerization site. As to quaternary structure, (Microbial infection) Interacts with HIV-1 Vif. Zn(2+) is required as a cofactor. In terms of tissue distribution, expressed in spleen, testes, peripherical blood lymphocytes, heart, thymus, prostate and ovary.

It localises to the nucleus. The protein resides in the cytoplasm. The enzyme catalyses a 2'-deoxycytidine in single-stranded DNA + H2O + H(+) = a 2'-deoxyuridine in single-stranded DNA + NH4(+). (Microbial infection) Antiviral activity is neutralized by the HIV-1 virion infectivity factor (Vif), that prevents its incorporation into progeny HIV-1 virions by both inhibiting its translation and/or by inducing its ubiquitination and subsequent degradation by the 26S proteasome. In terms of biological role, DNA deaminase (cytidine deaminase) which acts as an inhibitor of retrovirus replication and retrotransposon mobility via deaminase-dependent and -independent mechanisms. After the penetration of retroviral nucleocapsids into target cells of infection and the initiation of reverse transcription, it can induce the conversion of cytosine to uracil in the minus-sense single-strand viral DNA, leading to G-to-A hypermutations in the subsequent plus-strand viral DNA. The resultant detrimental levels of mutations in the proviral genome, along with a deamination-independent mechanism that works prior to the proviral integration, together exert efficient antiretroviral effects in infected target cells. Selectively targets single-stranded DNA and does not deaminate double-stranded DNA or single- or double-stranded RNA. Exhibits antiviral activity against simian immunodeficiency virus (SIV), hepatitis B virus (HBV), herpes simplex virus 1 (HHV-1) and Epstein-Barr virus (EBV) and may inhibit the mobility of LTR and non-LTR retrotransposons. May also play a role in the epigenetic regulation of gene expression through the process of active DNA demethylation. The protein is DNA dC-&gt;dU-editing enzyme APOBEC-3C (APOBEC3C) of Homo sapiens (Human).